Here is a 250-residue protein sequence, read N- to C-terminus: MYKLVLIRHGESTWNLDNRFTGWTDVDLTETGIAQAKNSGQLLKAEGYDFDLAYTSVLKRATRTLWHVLDEMDQTWLPVEHSWRLNERHYGDLQGLNKAETAKKFGDEQVLVWRRSYDTPPPPLAANDPRSERSDRRYANLLPGQVPLTECLKDTVERVLPFWNEAMAPAIKAGKRIVVAAHGNSIRALVKYLDNISDSDIVGLNIPNGIPLVYELDENLKPLRSYYLGDSEAAAKAAAAVGAQGKAVAA.

Substrate contacts are provided by residues Arg-8 to Asn-15, Thr-21 to Gly-22, Arg-60, Glu-87 to Tyr-90, Lys-98, and Arg-114 to Arg-115. His-9 serves as the catalytic Tele-phosphohistidine intermediate. Glu-87 acts as the Proton donor/acceptor in catalysis. The segment at Ser-116 to Asp-135 is disordered. Gly-183 to Asn-184 contacts substrate.

This sequence belongs to the phosphoglycerate mutase family. BPG-dependent PGAM subfamily. Homodimer.

It catalyses the reaction (2R)-2-phosphoglycerate = (2R)-3-phosphoglycerate. It functions in the pathway carbohydrate degradation; glycolysis; pyruvate from D-glyceraldehyde 3-phosphate: step 3/5. Its function is as follows. Catalyzes the interconversion of 2-phosphoglycerate and 3-phosphoglycerate. This chain is 2,3-bisphosphoglycerate-dependent phosphoglycerate mutase, found in Polaromonas naphthalenivorans (strain CJ2).